Reading from the N-terminus, the 99-residue chain is Small ribosomal subunit protein bS20 (99 aa).

This sequence belongs to the bacterial ribosomal protein bS20 family.

Functionally, binds directly to 16S ribosomal RNA. This Caldicellulosiruptor bescii (strain ATCC BAA-1888 / DSM 6725 / KCTC 15123 / Z-1320) (Anaerocellum thermophilum) protein is Small ribosomal subunit protein bS20.